Consider the following 240-residue polypeptide: uncharacterized protein (240 aa).

An ABC transporter domain is found at 2–223 (VRIQDLSLAF…GNAPRELHQA (222 aa)). 34-41 (GSSGVGKS) contacts ATP.

This sequence belongs to the ABC transporter superfamily.

This is an uncharacterized protein from Haemophilus influenzae (strain ATCC 51907 / DSM 11121 / KW20 / Rd).